A 1879-amino-acid polypeptide reads, in one-letter code: Protein TIC 214 (1879 aa).

A run of 6 helical transmembrane segments spans residues 18–38 (IINSVVVVGLYYGFLTTFSIG), 64–84 (FITGQLMMFISIYYAPLHLAL), 87–107 (PYTITVLALPYLLFHFFWTNP), 124–144 (LSIQCVFLNNLIFQLFNHFIL), 172–192 (VGWLIGHILFMKSVGLILVWI), and 218–238 (IAPIFSIILFITWVYYLGRIP). 2 disordered regions span residues 245–305 (ETSK…IDET) and 586–702 (ISTS…DEPM). Composition is skewed to acidic residues over residues 253–268 (AETEESEEETDVEIET) and 295–305 (EKEDPDKIDET). A compositionally biased stretch (low complexity) spans 586 to 688 (ISTSTPTSTP…SIPASTSTST (103 aa)). Basic and acidic residues predominate over residues 691 to 701 (IKSKDEPKDEP).

This sequence belongs to the TIC214 family. As to quaternary structure, part of the Tic complex.

The protein localises to the plastid. It localises to the chloroplast inner membrane. Functionally, involved in protein precursor import into chloroplasts. May be part of an intermediate translocation complex acting as a protein-conducting channel at the inner envelope. The polypeptide is Protein TIC 214 (Cucumis sativus (Cucumber)).